The sequence spans 308 residues: Mitoferrin (308 aa).

A run of 6 helical transmembrane segments spans residues 13-29, 69-89, 111-131, 168-184, 213-233, and 285-302; these read GGSFYVHLIAGAAAGFA, ITGLFRGLTAVAAGAAPSHAV, IKVGIAGAIATMTSEAVASPM, YTTTLVMNVPYNIVYFA, LVAGGGAGMLAAAFTNPFDVV, and MVFHSMSSAIVWSVYEYF. 3 Solcar repeats span residues 14–100, 108–192, and 207–305; these read GSFY…LKFK, HHPI…LKKI, and YQLI…FKFI.

The protein belongs to the mitochondrial carrier (TC 2.A.29) family.

It localises to the mitochondrion inner membrane. In terms of biological role, mitochondrial solute carriers shuttle metabolites, nucleotides, and cofactors through the mitochondrial inner membrane. Mitochondrial iron transporter that mediates iron uptake. Probably required for heme synthesis of hemoproteins and Fe-S cluster assembly. In Dictyostelium discoideum (Social amoeba), this protein is Mitoferrin (mcfF).